The sequence spans 401 residues: Zinc finger CCHC domain-containing protein 12 (401 aa).

Disordered regions lie at residues 1–20 (MASI…PLPP) and 270–292 (DSDE…SAGP). Residues 270–282 (DSDEDVILVEPDD) show a composition bias toward acidic residues. The CCHC-type zinc-finger motif lies at 345-362 (VHCSHCGEEGHSKETCDN).

The protein belongs to the ZCCHC12 family. In terms of assembly, interacts with SMAD1 and CREB-binding protein (CBP). Forms a protein-DNA complex through its association with SMAD1.

Its function is as follows. Transcriptional coactivator in the bone morphogenetic protein (BMP)-signaling pathway. It positively modulates BMP signaling by interacting with SMAD1 and associating with CBP in the transcription complex. It contributes to the BMP-induced enhancement of cholinergic-neuron-specific gene expression. In Rattus norvegicus (Rat), this protein is Zinc finger CCHC domain-containing protein 12 (Zcchc12).